A 921-amino-acid polypeptide reads, in one-letter code: Isoleucine--tRNA ligase (921 aa).

The short motif at 57-67 is the 'HIGH' region element; the sequence is PYANGDIHMGH. Glu552 serves as a coordination point for L-isoleucyl-5'-AMP. The short motif at 593–597 is the 'KMSKS' region element; sequence KMSKS. ATP is bound at residue Lys596. Residues Cys888, Cys891, Cys908, and Cys911 each contribute to the Zn(2+) site.

This sequence belongs to the class-I aminoacyl-tRNA synthetase family. IleS type 1 subfamily. As to quaternary structure, monomer. Zn(2+) is required as a cofactor.

Its subcellular location is the cytoplasm. It catalyses the reaction tRNA(Ile) + L-isoleucine + ATP = L-isoleucyl-tRNA(Ile) + AMP + diphosphate. Its function is as follows. Catalyzes the attachment of isoleucine to tRNA(Ile). As IleRS can inadvertently accommodate and process structurally similar amino acids such as valine, to avoid such errors it has two additional distinct tRNA(Ile)-dependent editing activities. One activity is designated as 'pretransfer' editing and involves the hydrolysis of activated Val-AMP. The other activity is designated 'posttransfer' editing and involves deacylation of mischarged Val-tRNA(Ile). The sequence is that of Isoleucine--tRNA ligase from Bacillus cereus (strain 03BB102).